Here is a 557-residue protein sequence, read N- to C-terminus: Dihydroxy-acid dehydratase (557 aa).

Residue Asp78 participates in Mg(2+) binding. Cys119 contacts [2Fe-2S] cluster. Residues Asp120 and Lys121 each coordinate Mg(2+). Position 121 is an N6-carboxylysine (Lys121). Cys192 contributes to the [2Fe-2S] cluster binding site. Glu442 contributes to the Mg(2+) binding site. The Proton acceptor role is filled by Ser468.

It belongs to the IlvD/Edd family. Homodimer. Requires [2Fe-2S] cluster as cofactor. Mg(2+) is required as a cofactor.

The enzyme catalyses (2R)-2,3-dihydroxy-3-methylbutanoate = 3-methyl-2-oxobutanoate + H2O. The catalysed reaction is (2R,3R)-2,3-dihydroxy-3-methylpentanoate = (S)-3-methyl-2-oxopentanoate + H2O. It participates in amino-acid biosynthesis; L-isoleucine biosynthesis; L-isoleucine from 2-oxobutanoate: step 3/4. Its pathway is amino-acid biosynthesis; L-valine biosynthesis; L-valine from pyruvate: step 3/4. In terms of biological role, functions in the biosynthesis of branched-chain amino acids. Catalyzes the dehydration of (2R,3R)-2,3-dihydroxy-3-methylpentanoate (2,3-dihydroxy-3-methylvalerate) into 2-oxo-3-methylpentanoate (2-oxo-3-methylvalerate) and of (2R)-2,3-dihydroxy-3-methylbutanoate (2,3-dihydroxyisovalerate) into 2-oxo-3-methylbutanoate (2-oxoisovalerate), the penultimate precursor to L-isoleucine and L-valine, respectively. The protein is Dihydroxy-acid dehydratase of Bacillus cereus (strain Q1).